A 225-amino-acid polypeptide reads, in one-letter code: MRIDIITVLPEMIENTLNCSIIGRAQERGLLELKLHQLRDYSTDKWKRVDDYPFGGEPGMVMQIEPIDRIITELKTQREYDEVIFTSPDGERFDQPMANELSLLSNLIVLCGHYKGIDYRIREHLITREISIGDYVLTGGELAAAVMTDAIARLIPGVLNDAGSALSDTFQDNLLAPPVYTRPAEYKGWRVPDILLSGHEANIAKWRLEQAVERTKRLRPDLIKD.

Residues Gly-112 and 132 to 137 contribute to the S-adenosyl-L-methionine site; that span reads IGDYVL.

Belongs to the RNA methyltransferase TrmD family. Homodimer.

It localises to the cytoplasm. The enzyme catalyses guanosine(37) in tRNA + S-adenosyl-L-methionine = N(1)-methylguanosine(37) in tRNA + S-adenosyl-L-homocysteine + H(+). Specifically methylates guanosine-37 in various tRNAs. The chain is tRNA (guanine-N(1)-)-methyltransferase from Porphyromonas gingivalis (strain ATCC BAA-308 / W83).